The following is an 842-amino-acid chain: uncharacterized protein (842 aa).

Disordered regions lie at residues 1–20 (MLHF…SPKE) and 142–209 (NSSS…TSSS). A uDENN FNIP1/2-type domain is found at 35 to 422 (TKDVTFRLVL…TAKSFHKCIL (388 aa)). Positions 183–209 (ANLSSSSKNMKDSTLSSQKARSNTSSS) are enriched in polar residues. The cDENN FNIP1/2-type domain occupies 430–772 (APLIKPSVFS…CYEIHEFPSE (343 aa)). Phosphoserine is present on residues Ser-573 and Ser-590. The dDENN FNIP1/2-type domain occupies 777 to 842 (YAPFLLKEHH…KEVLRVCSHC (66 aa)).

It is found in the cytoplasm. This is an uncharacterized protein from Schizosaccharomyces pombe (strain 972 / ATCC 24843) (Fission yeast).